A 759-amino-acid polypeptide reads, in one-letter code: TIR domain-containing adapter molecule 1 (759 aa).

The segment at 1-153 (MACTGPSLSG…CGWDVLGDLG (153 aa)) is TRIF-NTD. The TRAF6-binding motif lies at 84-91 (ETPEEPPD). The pLxIS motif signature appears at 207 to 210 (LEIS). Residue serine 210 is modified to Phosphoserine. A Glycyl lysine isopeptide (Lys-Gly) (interchain with G-Cter in ubiquitin) cross-link involves residue lysine 229. Residues 241-296 (EPAPMGCQEPEEMSWPPSVEAADSPVRPSSPGPGLPEVTTDACPASPHDPPEVPEI) are disordered. 2 consecutive short sequence motifs (TRAF6-binding) follow at residues 248-255 (QEPEEMSW) and 299-309 (HYPVECTDVPA). The interval 340–426 (LSAQPRPPTP…PEPPPPELES (87 aa)) is disordered. Positions 351–365 (VPQTSPSFPSASTSP) are enriched in low complexity. Pro residues predominate over residues 366–376 (FPSPSTPPEAH). Positions 430 to 590 (KFYNFVVLHA…QDARALREQS (161 aa)) constitute a TIR domain. Residues 549 to 759 (LLDEHSKIFA…APEDNTRETE (211 aa)) form a sufficient to induce apoptosis region. The disordered stretch occupies residues 642–723 (GQGSLGTPPS…PPARPQSPGL (82 aa)). Residues 659-705 (HQPPPLPPWLGGTPPPIFPQPPQTFPQPPPTFPQPPPTFQQPPPACP) are compositionally biased toward pro residues.

As to quaternary structure, homodimer. Found in a multi-helicase-TICAM1 complex at least composed of DHX36, DDX1, DDX21 and TICAM1; this complex exists in resting cells with or without poly(I:C) RNA ligand stimulation. Interacts (via TIR domain) with DDX21 (via C-terminus). Interacts (via TIR domain) with DHX36 (via C-terminus). Interacts with AZI2 and IRF7. Interacts with TICAM2 in TLR4 recruitment. Interaction with PIAS4 inhibits the TICAM1-induced NF-kappa-B, IRF and IFNB1 activation. Interacts with IKBKB and IKBKE. Interaction with SARM1 blocks TICAM1-dependent transcription factor activation. Interacts with TRAF3. Interacts (when phosphorylated) with IRF3; following activation and phosphorylation on the pLxIS motif by TBK1, recruits IRF3. Interacts with TBK1, TRAF6 and RIPK1 and these interactions are enhanced in the presence of WDFY1. Interacts with TRAFD1. Interacts with UBQLN1 (via UBA domain). Interacts with TLR4 in response to LPS in a WDFY1-dependent manner. Interacts with WDFY1 in response to poly(I:C). Interacts (via the TIR domain) with TLR3 in response to poly(I:C) and this interaction is enhanced in the presence of WDFY1. Interacts with TRIM56. Component of a multi-helicase-TICAM1 complex that acts as a cytoplasmic sensor of viral double-stranded RNA (dsRNA) and plays a role in the activation of a cascade of antiviral responses including the induction of pro-inflammatory cytokines. Interacts (via the TIR domain) with TLR5. Interacts with TRIM8. Interacts with TAX1BP1 and TRIM32; these interactions target TICAM1 to TAX1BP1-mediated selective autophagic degradation. Interacts with DDX50. Post-translationally, phosphorylated by TBK1. Following activation, phosphorylated by TBK1 at Ser-210 in the pLxIS motif. The phosphorylated pLxIS motif constitutes an IRF3-binding motif, leading to recruitment of the transcription factor IRF3 to induce type-I interferons and other cytokines. Polyubiquitinated at Lys-229 by TRIM38 with 'Lys-48'-linked chains, leading to proteasomal degradation. Polyubiquitinated with 'Lys-6' and 'Lys-33'-linked chains in a TRIM8-dependent manner.

It localises to the cytoplasmic vesicle. Its subcellular location is the autophagosome. The protein resides in the cytoplasm. It is found in the cytosol. The protein localises to the mitochondrion. Functionally, involved in innate immunity against invading pathogens. Adapter used by TLR3, TLR4 (through TICAM2) and TLR5 to mediate NF-kappa-B and interferon-regulatory factor (IRF) activation, and to induce apoptosis. Ligand binding to these receptors results in TRIF recruitment through its TIR domain. Distinct protein-interaction motifs allow recruitment of the effector proteins TBK1, TRAF6 and RIPK1, which in turn, lead to the activation of transcription factors IRF3 and IRF7, NF-kappa-B and FADD respectively. Phosphorylation by TBK1 on the pLxIS motif leads to recruitment and subsequent activation of the transcription factor IRF3 to induce expression of type I interferon and exert a potent immunity against invading pathogens. Component of a multi-helicase-TICAM1 complex that acts as a cytoplasmic sensor of viral double-stranded RNA (dsRNA) and plays a role in the activation of a cascade of antiviral responses including the induction of pro-inflammatory cytokines. The sequence is that of TIR domain-containing adapter molecule 1 (TICAM1) from Bos taurus (Bovine).